A 480-amino-acid chain; its full sequence is Lysostaphin (480 aa).

A signal peptide spans 1 to 23; it reads MKKTKNNYYTTPLAIGLSTFALA. A propeptide spanning residues 24-234 is cleaved from the precursor; the sequence is SIVYGGIQNE…ALVQNRTALR (211 aa). A run of 13 repeats spans residues 49–61, 62–74, 75–87, 88–100, 101–113, 114–126, 127–139, 140–152, 153–165, 166–178, 179–191, 192–204, and 205–217. The interval 49–230 is 14 X 13 AA tandem repeats of A-E-V-E-T-S-K-[AP]-P-V-E-N-T; sequence AEVETSKPPV…ETSKALVQNR (182 aa). Positions 51-219 are disordered; it reads VETSKPPVEN…SKAPVENTAE (169 aa). Residues 218 to 230 form a 14; approximate repeat; it reads AEVETSKALVQNR. Residues His-266 and Asp-270 each coordinate Zn(2+). The active site involves His-347. His-349 provides a ligand contact to Zn(2+). Positions 400–468 constitute an SH3b domain; the sequence is SESASFTPNT…YLPVRTWNKS (69 aa).

It belongs to the peptidase M23B family. Monomer. It depends on Zn(2+) as a cofactor.

The protein resides in the secreted. It carries out the reaction Hydrolysis of the -Gly-|-Gly- bond in the pentaglycine inter-peptide link joining staphylococcal cell wall peptidoglycans.. Its function is as follows. Lyses staphylococcal cells by hydrolyzing the polyglycine interpeptide bridges of the peptidoglycan. This Staphylococcus staphylolyticus protein is Lysostaphin (lss).